Here is a 346-residue protein sequence, read N- to C-terminus: 3-isopropylmalate dehydrogenase (346 aa).

76-87 is an NAD(+) binding site; sequence GPQWTDPNNRPE. Substrate contacts are provided by arginine 94, arginine 104, arginine 132, and aspartate 217. Mg(2+) is bound by residues aspartate 217, aspartate 241, and aspartate 245. An NAD(+)-binding site is contributed by 275-287; sequence GSAPDIANQNLAN.

This sequence belongs to the isocitrate and isopropylmalate dehydrogenases family. LeuB type 1 subfamily. Homodimer. Requires Mg(2+) as cofactor. It depends on Mn(2+) as a cofactor.

It localises to the cytoplasm. The enzyme catalyses (2R,3S)-3-isopropylmalate + NAD(+) = 4-methyl-2-oxopentanoate + CO2 + NADH. The protein operates within amino-acid biosynthesis; L-leucine biosynthesis; L-leucine from 3-methyl-2-oxobutanoate: step 3/4. In terms of biological role, catalyzes the oxidation of 3-carboxy-2-hydroxy-4-methylpentanoate (3-isopropylmalate) to 3-carboxy-4-methyl-2-oxopentanoate. The product decarboxylates to 4-methyl-2 oxopentanoate. This is 3-isopropylmalate dehydrogenase from Staphylococcus haemolyticus (strain JCSC1435).